Reading from the N-terminus, the 193-residue chain is Imidazoleglycerol-phosphate dehydratase (193 aa).

It belongs to the imidazoleglycerol-phosphate dehydratase family.

Its subcellular location is the cytoplasm. The catalysed reaction is D-erythro-1-(imidazol-4-yl)glycerol 3-phosphate = 3-(imidazol-4-yl)-2-oxopropyl phosphate + H2O. Its pathway is amino-acid biosynthesis; L-histidine biosynthesis; L-histidine from 5-phospho-alpha-D-ribose 1-diphosphate: step 6/9. The sequence is that of Imidazoleglycerol-phosphate dehydratase from Methanospirillum hungatei JF-1 (strain ATCC 27890 / DSM 864 / NBRC 100397 / JF-1).